A 570-amino-acid chain; its full sequence is Formate--tetrahydrofolate ligase (570 aa).

Residue 65–72 (TPHGEGKT) coordinates ATP.

Belongs to the formate--tetrahydrofolate ligase family.

It carries out the reaction (6S)-5,6,7,8-tetrahydrofolate + formate + ATP = (6R)-10-formyltetrahydrofolate + ADP + phosphate. It functions in the pathway one-carbon metabolism; tetrahydrofolate interconversion. This is Formate--tetrahydrofolate ligase from Shewanella putrefaciens (strain CN-32 / ATCC BAA-453).